The sequence spans 366 residues: Chalcone synthase B (366 aa).

The active site involves C172.

Belongs to the thiolase-like superfamily. Chalcone/stilbene synthases family.

It carries out the reaction (E)-4-coumaroyl-CoA + 3 malonyl-CoA + 3 H(+) = 2',4,4',6'-tetrahydroxychalcone + 3 CO2 + 4 CoA. It functions in the pathway secondary metabolite biosynthesis; flavonoid biosynthesis. Its function is as follows. The primary product of this enzyme is 4,2',4',6'-tetrahydroxychalcone (also termed naringenin-chalcone or chalcone) which can under specific conditions spontaneously isomerize into naringenin. The sequence is that of Chalcone synthase B (CHSB) from Ipomoea triloba (Trilobed morning glory).